Reading from the N-terminus, the 463-residue chain is Chaperone SurA (463 aa).

The signal sequence occupies residues 1-25 (MTRYFSIVLSLLLAVSCVFLPVASA). 2 consecutive PpiC domains span residues 175-277 (GAQY…KLVE) and 291-390 (ATEY…QRLG). Residues 439–463 (ADDHHTPSAAVTPATGAVLPAATKH) are disordered.

The protein localises to the periplasm. It carries out the reaction [protein]-peptidylproline (omega=180) = [protein]-peptidylproline (omega=0). Chaperone involved in the correct folding and assembly of outer membrane proteins. Recognizes specific patterns of aromatic residues and the orientation of their side chains, which are found more frequently in integral outer membrane proteins. May act in both early periplasmic and late outer membrane-associated steps of protein maturation. This is Chaperone SurA from Xylella fastidiosa (strain Temecula1 / ATCC 700964).